A 265-amino-acid polypeptide reads, in one-letter code: MKINLCNIQFQSLINLLNLQATTMSLLNSNKIKADLIPDEDDPKKITLRLNSVPEEHTDDNSSIDLPLTTPKQKDDFMNAIKSFETLNIEPDIVKTEQADAPATSGDNNRKVVDANVDEYTVDGLKLKSKYVAYYKCLKILVDFLVMYVSKEVSMKEYEQVYTLGRQLYEVLRSIFVDEPFKLWLERNTHEFDNNKDKILETLQSELKLALADKDKLKTCTFKDIITNLLNTKLDCKYDCADEYIKPNCIVDTYNCCNLVFKKET.

This is an uncharacterized protein from Autographa californica nuclear polyhedrosis virus (AcMNPV).